The sequence spans 98 residues: Large ribosomal subunit protein uL23 (98 aa).

The protein belongs to the universal ribosomal protein uL23 family. In terms of assembly, part of the 50S ribosomal subunit. Contacts protein L29, and trigger factor when it is bound to the ribosome.

Its function is as follows. One of the early assembly proteins it binds 23S rRNA. One of the proteins that surrounds the polypeptide exit tunnel on the outside of the ribosome. Forms the main docking site for trigger factor binding to the ribosome. This Hahella chejuensis (strain KCTC 2396) protein is Large ribosomal subunit protein uL23.